Consider the following 783-residue polypeptide: MATLTEIATLEEKYIELCKMHGILPNTAILSAFFEAEVKKSRNQRCIMNLYVDRVKYDDYLPLLELCNEINTSEVQGIDLFVRSACSLEDHYALPLIRSVNQKLRVVHLHDSFGKNFWQDVFFQGLSCKVLNVRSMHIHKLNIVGEFTQLHTLILDKNRIVGFGEDCFSCMPKLTYLSMCDTLVSDLWTSAAALLKLPSLKELRFQIWISCSDSSPLNSESSPSSSTKDDINTFIESDPPVEADMWDVAEQMDPSLPVEETLHSMDFSYKIPEQDDLDSHVSVSAGLNGEVLMREKVRRGKMPYQPKDVSPVDTFTRQFGNVGLKYISSKASPICSEKHYRMYMINSLPKLQVLDNLAIRKSDRDKAIETYSANFEDLPYKRKKESVVRVLENREKRSSKGKSQNSYKRSLCAAKMGSPASPLLHSLPFLSSRIQQEDDNSRLCPRQFEYHPLDPSLMVFGTLDGEVVVLNHESGKIFRYIPSNGSQSTILGLCWLKIYPSMVIAGSANGSLKLYDIQKASSTVTTSSHSTSGSVTFDEFDQLTSVHANSTDQLFLASGYSKDVALYDIGRGTRLQVFANMHQEHINVVKFSNHSPFLFATSSFDKDVKLWDLRQEPSRPCYTASSTKGNVMVCFSPDDRYLLASAVDNEVRQLLTVDGRLHLNFEIVPRVSSMNYTRSYYMNGNDYIISGSCDENVIRVCCAQTGRRLRDVTLEGNGSDFSMMYVQSLRGDPFRDFNMSVLAAYARSSSLSEIVKVNLLASRDSTAEESHGLRSYPSSSMGG.

WD repeat units follow at residues 145–198 (GEFT…LKLP) and 212–256 (SDSS…DPSL). The Nuclear localization signal signature appears at 382 to 389 (RKKESVVR). WD repeat units follow at residues 439 to 480 (DNSR…IFRY), 485 to 525 (GSQS…STVT), 538 to 577 (DEFDQLTSVHANSTDQLFLASGYSKDVALYDIGRGTRLQV), 581 to 621 (MHQE…SRPC), 625 to 664 (SSTKGNVMVCFSPDDRYLLASAVDNEVRQLLTVDGRLHLN), and 666 to 710 (EIVP…RRLR).

As to quaternary structure, interacts directly with DDB1A. Binds to COP1 and RUP1.

It localises to the nucleus. Functionally, may act as a substrate receptor of a CUL4-RING E3 ubiquitin-protein ligase (CRL4) complex involved in the negative regulation of cellular responses to ultraviolet-B (UV-B) illumination, likely in coordination with RUP1. Interacts with COP1 and probably prevents the formation of active UVR8-COP1 complex, thus avoiding UVR8-COP1-mediated positive regulation of UV-B responses. The polypeptide is Protein DWD HYPERSENSITIVE TO UV-B 1 (Arabidopsis thaliana (Mouse-ear cress)).